The following is a 345-amino-acid chain: Phosphoribosylformylglycinamidine cyclo-ligase (345 aa).

This sequence belongs to the AIR synthase family.

The protein resides in the cytoplasm. It carries out the reaction 2-formamido-N(1)-(5-O-phospho-beta-D-ribosyl)acetamidine + ATP = 5-amino-1-(5-phospho-beta-D-ribosyl)imidazole + ADP + phosphate + H(+). The protein operates within purine metabolism; IMP biosynthesis via de novo pathway; 5-amino-1-(5-phospho-D-ribosyl)imidazole from N(2)-formyl-N(1)-(5-phospho-D-ribosyl)glycinamide: step 2/2. This Prochlorococcus marinus (strain MIT 9313) protein is Phosphoribosylformylglycinamidine cyclo-ligase.